A 544-amino-acid chain; its full sequence is D-2-hydroxyglutarate dehydrogenase, mitochondrial (544 aa).

Residues 1-10 (MMMPRLVPRW) constitute a mitochondrion transit peptide. The 180-residue stretch at 119–298 (VRGSSKVLLR…TAVSILCPPK (180 aa)) folds into the FAD-binding PCMH-type domain. Position 124 is an N6-succinyllysine (Lys-124). The (R)-2-hydroxyglutarate site is built by Arg-409, Thr-413, and Lys-424. Arg-409 is a (R)-lactate binding site. Residues Arg-409, Thr-413, and Lys-424 each contribute to the (R)-malate site. 2 residues coordinate Zn(2+): His-457 and His-464. Asn-466 serves as a coordination point for (R)-2-hydroxyglutarate. Glu-498 serves as a coordination point for Zn(2+). A (R)-2-hydroxyglutarate-binding site is contributed by His-499. His-499 contributes to the (R)-lactate binding site. His-499 is a (R)-malate binding site.

This sequence belongs to the FAD-binding oxidoreductase/transferase type 4 family. The cofactor is FAD.

It is found in the mitochondrion. The enzyme catalyses (R)-2-hydroxyglutarate + A = 2-oxoglutarate + AH2. The catalysed reaction is (R)-malate + A = oxaloacetate + AH2. Its activity is regulated as follows. Activated by zinc and cobalt ions. Catalyzes the oxidation of D-2-hydroxyglutarate (D-2-HG) to alpha-ketoglutarate. Also catalyzes the oxidation of other D-2-hydroxyacids, such as D-malate (D-MAL) and D-lactate (D-LAC). Exhibits high activities towards D-2-HG and D-MAL but a very weak activity towards D-LAC. The protein is D-2-hydroxyglutarate dehydrogenase, mitochondrial (D2HGDH) of Bos taurus (Bovine).